We begin with the raw amino-acid sequence, 154 residues long: TSET complex member tstD (154 aa).

This sequence belongs to the adaptor complexes small subunit family. In terms of assembly, component of the TSET complex, a heterohexamer composed of tstA, tstB, tstC, tstD, tstE and tstF, which may act in plasma membrane turnover. tstA, tstB, tstC and tstD are likely to be the core complex members with tstE and tstF acting as associated scaffold proteins.

The protein localises to the cell membrane. The protein resides in the cytoplasm. This is TSET complex member tstD from Dictyostelium discoideum (Social amoeba).